A 515-amino-acid chain; its full sequence is Cyclic AMP receptor-like protein G (515 aa).

Over 1 to 16 (MSSIIFIPNDADNINS) the chain is Extracellular. The chain crosses the membrane as a helical span at residues 17–37 (IMVTISSSLSLVGCLFILSIY). Topologically, residues 38–50 (IYYKELREFQLKL) are cytoplasmic. The helical transmembrane segment at 51-71 (IFIMTINDFIISIIFLIATHI) threads the bilayer. Topologically, residues 72-92 (QTKYFDAITNVFPFFCNFPDS) are extracellular. The helical transmembrane segment at 93 to 113 (LLHYFFLSSFFWEVCIAHTLI) threads the bilayer. Residues 114–129 (QVIKYNNDKVEDNLKK) lie on the Cytoplasmic side of the membrane. A helical membrane pass occupies residues 130–150 (YFIFSNGLSALIMVSLFFIRS). The Extracellular segment spans residues 151-164 (YSKIDCHHDSIFPH). Residues 165 to 185 (LLFFIPLLLTWIYNIIVCALL) traverse the membrane as a helical segment. The Cytoplasmic segment spans residues 186–276 (TKTFKEQAMN…IRKTPNIIWT (91 aa)). The helical transmembrane segment at 277 to 297 (SIFFLFSFGFIWSWSILVIIL) threads the bilayer. The Extracellular portion of the chain corresponds to 298–306 (KYLSLDVKY). Residues 307–327 (ILMISYFFIPLHGCMNAVCFG) form a helical membrane-spanning segment. Residues 328-515 (VNDRLRMNLK…FCTIDEDETK (188 aa)) lie on the Cytoplasmic side of the membrane. Residues 362-375 (NGNNKNNKNNNGAN) are compositionally biased toward low complexity. 2 disordered regions span residues 362–409 (NGNN…YYQI) and 469–515 (NNNN…DETK). Acidic residues predominate over residues 385–396 (SPDDDDDEDDDN). Low complexity-rich tracts occupy residues 397–407 (NNNNYSDGNYY) and 469–504 (NNNN…NNNN).

The protein belongs to the G-protein coupled receptor 5 family.

The protein resides in the membrane. Its function is as follows. Receptor for cAMP. In Dictyostelium discoideum (Social amoeba), this protein is Cyclic AMP receptor-like protein G (crlG).